A 394-amino-acid chain; its full sequence is Flagellin B (394 aa).

This sequence belongs to the bacterial flagellin family.

Its subcellular location is the secreted. It localises to the bacterial flagellum. Functionally, flagellin is the subunit protein which polymerizes to form the filaments of bacterial flagella. The polypeptide is Flagellin B (flaB) (Rhizobium meliloti (strain 1021) (Ensifer meliloti)).